The sequence spans 151 residues: MQINLLSIQKNNNDEFSKIDEHYTKLIKKFCSFNEICVFNNKINQAQNTNSIEAKKSYTNALNPYKKGFCIALDEKGKEFTSVEFAKLLQDKNEITFFIGGAYGFEQEFIAQMHTSIALSKMTLVHKFAKTMLLEQIYRAFCINTNHPYHK.

S-adenosyl-L-methionine-binding positions include leucine 73, glycine 100, and 119–124 (LSKMTL).

This sequence belongs to the RNA methyltransferase RlmH family. In terms of assembly, homodimer.

The protein localises to the cytoplasm. The enzyme catalyses pseudouridine(1915) in 23S rRNA + S-adenosyl-L-methionine = N(3)-methylpseudouridine(1915) in 23S rRNA + S-adenosyl-L-homocysteine + H(+). In terms of biological role, specifically methylates the pseudouridine at position 1915 (m3Psi1915) in 23S rRNA. The sequence is that of Ribosomal RNA large subunit methyltransferase H from Campylobacter lari (strain RM2100 / D67 / ATCC BAA-1060).